The sequence spans 614 residues: MTDVPAPAFDGKAFAAQLSTAPGVYRMYAADDTLLYVGKARALRNRVGSYFNGSPKNARIMSMISQIVRMDVTVTRSEAEALLLENQLIKSLSPRYNVSLRDDKTYPHVLLTREDWPRIALHRGPRAIPGRYFGPYPGVTAVRETLNLMHKLFKLRSCEDSVFRNRSRPCLQYQIGRCSAPCVELVAPAEYAESVRRAALFLEGKSDELTRELGEQMQAASEALEFEQAARLRDLISSLRSMQTRQYVDGRAADLDVLAVAMQGSQACVLLLAFRDGRNLGTRPFFPRTNGEESPEEVLAAFVSQYYIEFEPPREILLDREIPDADLLVAALSASAERKVQLKWNVRGERAGYVELASRNAQLTLATELNSRNAQHARSDALREMLGLAEPVKRVECFDISHTLGEATVASCVVFDAAGPVRAQYRRFNISGIEPGDDYAAMRQAIDRRFRRAVEEQGVLPDVLLIDGGAGQLAQAQAALADLGVEGVLLVGVAKGVERRAGHEALVMPDGRELRPGAANPALQFIQQVRDEAHRFAITGHRGRRQKARMTSKLEDIPGIGPRRRASLLKHFGGLVGLKAAGEAEIAKVEGINDALAARIYANLHGLATPDAAE.

Positions 20 to 98 (TAPGVYRMYA…IKSLSPRYNV (79 aa)) constitute a GIY-YIG domain. Residues 207 to 242 (DELTRELGEQMQAASEALEFEQAARLRDLISSLRSM) form the UVR domain.

Belongs to the UvrC family. Interacts with UvrB in an incision complex.

The protein localises to the cytoplasm. Its function is as follows. The UvrABC repair system catalyzes the recognition and processing of DNA lesions. UvrC both incises the 5' and 3' sides of the lesion. The N-terminal half is responsible for the 3' incision and the C-terminal half is responsible for the 5' incision. This chain is UvrABC system protein C, found in Stenotrophomonas maltophilia (strain K279a).